The sequence spans 304 residues: Ribonuclease Z (304 aa).

H63, H65, D67, H68, H141, D208, and H266 together coordinate Zn(2+). The active-site Proton acceptor is D67.

This sequence belongs to the RNase Z family. In terms of assembly, homodimer. It depends on Zn(2+) as a cofactor.

The enzyme catalyses Endonucleolytic cleavage of RNA, removing extra 3' nucleotides from tRNA precursor, generating 3' termini of tRNAs. A 3'-hydroxy group is left at the tRNA terminus and a 5'-phosphoryl group is left at the trailer molecule.. Zinc phosphodiesterase, which displays some tRNA 3'-processing endonuclease activity. Probably involved in tRNA maturation, by removing a 3'-trailer from precursor tRNA. This chain is Ribonuclease Z, found in Chlamydia muridarum (strain MoPn / Nigg).